A 417-amino-acid polypeptide reads, in one-letter code: Acetyltransferase nanB (417 aa).

The signal sequence occupies residues 1 to 24; it reads MRPSTTTLSLLVFLISSILLATTG. 5 helical membrane passes run 150-170, 284-304, 307-327, 356-376, and 389-409; these read LAVS…LKNI, YLNN…FNWI, VQDG…GYFL, VGAL…VYPF, and FVDV…AAAL.

Belongs to the wax synthase family.

The protein localises to the membrane. It functions in the pathway secondary metabolite biosynthesis. Acetyltransferase; part of the gene cluster that mediates the biosynthesis of the benzazepine alkaloid nanangelenin A which contains an unprecedented 3,4-dihydro-1-benzazepine-2,5-dione-N-prenyl-N-acetoxy-anthranilamide scaffold. The first step of nanangelenin biosynthesis is catalyzed by the indoleamine 2,3-dioxygenase nanC which produces N-formyl-kynurenine through the catabolism of tryptophan. The two-module NRPS nanA then utilizes anthranilate (Ant) and L-kynurenine (L-Kyn) to assemble the dipeptide product nanangelenin B. The first adenylation domain of nanA (A1) loads anthranilate onto the T1 domain, while A2 loads kynurenine, generated through spontaneous nonenzymatic deformylation of the nanC-supplied N-formyl-kynurenine. The peptide bond formation between the tethered amino acids is catalyzed by the first condensation domain (C1) between anthranilate's carbonyl carbon and kynurenine's aliphatic primary amine. The second C domain (C2) catalyzes the final cyclization event between the aromatic amine of kynurenine and the tethered carbonyl carbon, yielding nanangelenin B. The terminal T3 domain enhances the catalytic efficiency of C2, suggesting the T2-tethered Ant-L-Kyn is transferred to T3 prior to cyclization by C2. Once released from nanA, nanangelenin B is then prenylated by the prenyltransferase nanD to form nanangelenin C. Nanangelenin C is then N-hydroxylated by the FAD-dependent monooxygenase nanF and further acetylated by the acetyltransferase nanB to yield nanangelenin F. Finally, the N-methyltransferase nanE methylates the amide nitrogen of 1-benzazepine to convert nanangelenin F into nanangelenin A. NanE is also able to methylate most of the intermediates of the pathway such as nanangelenin B and nanangelenin C to produce nanangelenin D and nanangelenin E, respectively. The polypeptide is Acetyltransferase nanB (Aspergillus nanangensis).